The chain runs to 375 residues: Cobalt-precorrin-5B C(1)-methyltransferase (375 aa).

It belongs to the CbiD family.

The catalysed reaction is Co-precorrin-5B + S-adenosyl-L-methionine = Co-precorrin-6A + S-adenosyl-L-homocysteine. It participates in cofactor biosynthesis; adenosylcobalamin biosynthesis; cob(II)yrinate a,c-diamide from sirohydrochlorin (anaerobic route): step 6/10. Functionally, catalyzes the methylation of C-1 in cobalt-precorrin-5B to form cobalt-precorrin-6A. This Paracidovorax citrulli (strain AAC00-1) (Acidovorax citrulli) protein is Cobalt-precorrin-5B C(1)-methyltransferase.